The primary structure comprises 165 residues: Choriogonadotropin subunit beta (165 aa).

A signal peptide spans 1-20 (METLQGLLLWLLLSMGGAQA). Cystine bridges form between Cys-29–Cys-77, Cys-43–Cys-92, Cys-46–Cys-130, Cys-54–Cys-108, Cys-58–Cys-110, and Cys-113–Cys-120. Asn-33 and Asn-50 each carry an N-linked (GlcNAc...) asparagine glycan. Residues 131–165 (DDPNLQASSSSKDPPPSPPSPSRLLEPAGTPFLPQ) are disordered. O-linked (GalNAc...) serine glycans are attached at residues Ser-141, Ser-147, and Ser-152.

The protein belongs to the glycoprotein hormones subunit beta family. In terms of assembly, heterodimer of a common alpha chain and a unique beta chain which confers biological specificity to thyrotropin, lutropin, follitropin and gonadotropin. Placenta.

The protein localises to the secreted. Functionally, stimulates the ovaries to synthesize the steroids that are essential for the maintenance of pregnancy. In Papio anubis (Olive baboon), this protein is Choriogonadotropin subunit beta (CGB).